The chain runs to 486 residues: Malonate-semialdehyde dehydrogenase (486 aa).

Residues F154, K178, E181, R182, and S231 each contribute to the NAD(+) site. C286 acts as the Nucleophile in catalysis. E386 provides a ligand contact to NAD(+).

Belongs to the aldehyde dehydrogenase family. IolA subfamily. Homotetramer.

The enzyme catalyses 3-oxopropanoate + NAD(+) + CoA + H2O = hydrogencarbonate + acetyl-CoA + NADH + H(+). The catalysed reaction is 2-methyl-3-oxopropanoate + NAD(+) + CoA + H2O = propanoyl-CoA + hydrogencarbonate + NADH + H(+). It functions in the pathway polyol metabolism; myo-inositol degradation into acetyl-CoA; acetyl-CoA from myo-inositol: step 7/7. Catalyzes the oxidation of malonate semialdehyde (MSA) and methylmalonate semialdehyde (MMSA) into acetyl-CoA and propanoyl-CoA, respectively. Is involved in a myo-inositol catabolic pathway. Bicarbonate, and not CO2, is the end-product of the enzymatic reaction. The protein is Malonate-semialdehyde dehydrogenase of Bacillus cereus (strain ATCC 10987 / NRS 248).